The following is a 77-amino-acid chain: MQTINGNTDISPLMLASEYGQVTIVKYLLKHGNYNVKGWEKDNLHSDVSCQLTQITEISTLCEKANNPNHQYILETI.

One copy of the ANK repeat lies at 8–38; sequence TDISPLMLASEYGQVTIVKYLLKHGNYNVKG.

The sequence is that of Putative ankyrin repeat protein RC0956 from Rickettsia conorii (strain ATCC VR-613 / Malish 7).